The following is a 560-amino-acid chain: Proteasome-associated ATPase (560 aa).

The span at 1-19 (MSQQHDDRRPPDTADRDLA) shows a compositional bias: basic and acidic residues. Residues 1 to 21 (MSQQHDDRRPPDTADRDLARQ) are disordered. Residues 16–55 (RDLARQATSLAEKNERLTAALTAARAQLVEMKAQLEEVSK) adopt a coiled-coil conformation. 237–242 (GCGKTL) contributes to the ATP binding site. Residues 559-560 (YL) form a docks into pockets in the proteasome alpha-ring region.

This sequence belongs to the AAA ATPase family. Homohexamer. Assembles into a hexameric ring structure that caps the 20S proteasome core. Strongly interacts with the prokaryotic ubiquitin-like protein Pup through a hydrophobic interface; the interacting region of ARC lies in its N-terminal coiled-coil domain. There is one Pup binding site per ARC hexamer ring. Upon ATP-binding, the C-terminus of ARC interacts with the alpha-rings of the proteasome core, possibly by binding to the intersubunit pockets.

Its pathway is protein degradation; proteasomal Pup-dependent pathway. In terms of biological role, ATPase which is responsible for recognizing, binding, unfolding and translocation of pupylated proteins into the bacterial 20S proteasome core particle. May be essential for opening the gate of the 20S proteasome via an interaction with its C-terminus, thereby allowing substrate entry and access to the site of proteolysis. Thus, the C-termini of the proteasomal ATPase may function like a 'key in a lock' to induce gate opening and therefore regulate proteolysis. The chain is Proteasome-associated ATPase from Beutenbergia cavernae (strain ATCC BAA-8 / DSM 12333 / CCUG 43141 / JCM 11478 / NBRC 16432 / NCIMB 13614 / HKI 0122).